We begin with the raw amino-acid sequence, 416 residues long: Peptide chain release factor subunit 1 (416 aa).

This sequence belongs to the eukaryotic release factor 1 family. Heterodimer of two subunits, one of which binds GTP.

The protein resides in the cytoplasm. Functionally, directs the termination of nascent peptide synthesis (translation) in response to the termination codons UAA, UAG and UGA. This is Peptide chain release factor subunit 1 from Halorubrum lacusprofundi (strain ATCC 49239 / DSM 5036 / JCM 8891 / ACAM 34).